Here is a 237-residue protein sequence, read N- to C-terminus: CD209 antigen-like protein D (237 aa).

The Cytoplasmic portion of the chain corresponds to 1 to 54 (MSDSMESKTQQVVIPEDEECLMSGTRYSDISSRLQTKFGIKSLAEYTKQSRNPL). A helical; Signal-anchor for type II membrane protein membrane pass occupies residues 55 to 75 (VLQLLSFLFLAGLLLIILILV). Topologically, residues 76–237 (SKVPSSEVQN…KVSTSSCTTK (162 aa)) are extracellular. A disulfide bridge connects residues Cys-106 and Cys-117. One can recognise a C-type lectin domain in the interval 112 to 227 (FFNGSCYFFS…CDKLLFWICK (116 aa)). Residues Asn-114 and Asn-129 are each glycosylated (N-linked (GlcNAc...) asparagine). 2 disulfides stabilise this stretch: Cys-134–Cys-226 and Cys-205–Cys-218. 5 residues coordinate Ca(2+): Glu-196, Asn-198, Glu-203, Asn-214, and Asp-215.

The protein resides in the membrane. Its function is as follows. Probable pathogen-recognition receptor. May mediate the endocytosis of pathogens which are subsequently degraded in lysosomal compartments. May recognize in a calcium-dependent manner high mannose N-linked oligosaccharides in a variety of pathogen antigens. The chain is CD209 antigen-like protein D (Cd209d) from Mus musculus (Mouse).